The following is a 729-amino-acid chain: Fatty acid oxidation complex subunit alpha (729 aa).

The tract at residues 1–189 is enoyl-CoA hydratase/isomerase; that stretch reads MLYKGDTLYL…KIGLVDGVVK (189 aa). Residue Asp-296 participates in substrate binding. The segment at 311-729 is 3-hydroxyacyl-CoA dehydrogenase; that stretch reads ETPKQAAVLG…ARPVGDLKTA (419 aa). NAD(+) is bound by residues Met-324, Asp-343, 400–402, Lys-407, and Ser-429; that span reads VVE. The active-site For 3-hydroxyacyl-CoA dehydrogenase activity is His-450. Residue Asn-453 participates in NAD(+) binding. The substrate site is built by Asn-500 and Tyr-660. A disordered region spans residues 708 to 729; that stretch reads RHNEPYYPPVEPARPVGDLKTA.

It in the N-terminal section; belongs to the enoyl-CoA hydratase/isomerase family. In the C-terminal section; belongs to the 3-hydroxyacyl-CoA dehydrogenase family. As to quaternary structure, heterotetramer of two alpha chains (FadB) and two beta chains (FadA).

It carries out the reaction a (3S)-3-hydroxyacyl-CoA + NAD(+) = a 3-oxoacyl-CoA + NADH + H(+). The catalysed reaction is a (3S)-3-hydroxyacyl-CoA = a (2E)-enoyl-CoA + H2O. It catalyses the reaction a 4-saturated-(3S)-3-hydroxyacyl-CoA = a (3E)-enoyl-CoA + H2O. The enzyme catalyses (3S)-3-hydroxybutanoyl-CoA = (3R)-3-hydroxybutanoyl-CoA. It carries out the reaction a (3Z)-enoyl-CoA = a 4-saturated (2E)-enoyl-CoA. The catalysed reaction is a (3E)-enoyl-CoA = a 4-saturated (2E)-enoyl-CoA. The protein operates within lipid metabolism; fatty acid beta-oxidation. Involved in the aerobic and anaerobic degradation of long-chain fatty acids via beta-oxidation cycle. Catalyzes the formation of 3-oxoacyl-CoA from enoyl-CoA via L-3-hydroxyacyl-CoA. It can also use D-3-hydroxyacyl-CoA and cis-3-enoyl-CoA as substrate. The protein is Fatty acid oxidation complex subunit alpha of Escherichia coli O6:H1 (strain CFT073 / ATCC 700928 / UPEC).